The following is a 962-amino-acid chain: MPRSTWFKALLLLVALWGPAVQADIGWQPLQETIRKSDKDTRQYQAIRLDNDMVVLLVSDPQAVKSLSALVVPVGSLEDPEAHQGLAHYLEHMCLMGSKKYPQADSLAEYLKRHGGSHNASTAPYRTAFYLEVENDALPGAVDRLADAIAAPLLNKKYAERERNAVNAELTMARTRDGMRMAQVSAETINPAHPGSHFSGGNLETLSDKPGNPVQQALIAFHEKYYSSNLMKAVIYSNKPLPELASIAAATYGRVPNKQIKKPEITVPVITEAQKGIIIHYVPALPRKVLRVEFRIDNNSAQFRSKTDELVSYLIGNRSPGTLSDWLQKQGLVEGISADSDPIVNGNSGVFAISATLTDKGLANRDEVVAAIFSYLNMLREKGIDKRYFDELAHVLDLDFRYPSITRDMDYVEWLADTMIRVPVAHTLDAANIADRYDPAAIKNRLAMMTPQNARIWYISPQEPHNKTAYFVDAPYQVDKISEQTFKNWQQKAQGIALSLPELNPYIPDDFTLVKNDKNYVRPELIVDKADLRVVYAPSRYFASEPKADVSVVLRNPQAMDSARNQVLFALNDYLAGMALDQLSNQAAVGGISFSTNANNGLMVTANGYTQRLPQLFLALLEGYFSYDATEEQLAQAKSWYTQMMDSAEKGKAYEQAIMPVQMISQVPYFSRDERRALLPSITLKEVMAYRNALKTGARPEFLVIGNMSEAQATSLAQDVQKQLAANGSAWCRNKDVVVEKKQSVIFEKAGSSTDSALAAVFVPVGYDEYVSAAYSAMLGQIVQPWFYNQLRTEEQLGYAVFAFPMSVGRQWGMGFLLQSNDKQPSYLWQRYQAFFPDAEAKLRAMKPEEFAQIQQAIITQMRQAPQTLGEEASRLSKDFDRGNMRFDSRDKIIAQIKLLTPQKLADFFHQAVVEPQGMAILSQIAGSQNGKAEYVHPTGWKVWDNVSALQQTLPLMSEKNE.

An N-terminal signal peptide occupies residues 1–23 (MPRSTWFKALLLLVALWGPAVQA). His-88 lines the Zn(2+) pocket. Residue Glu-91 is the Proton acceptor of the active site. The Zn(2+) site is built by His-92 and Glu-169.

The protein belongs to the peptidase M16 family. Monomer. Zn(2+) serves as cofactor.

It localises to the periplasm. It carries out the reaction Preferential cleavage of 16-Tyr-|-Leu-17 and 25-Phe-|-Tyr-26 bonds of oxidized insulin B chain. Also acts on other substrates of Mw less than 7 kDa such as insulin and glucagon.. Endopeptidase that degrades small peptides of less than 7 kDa, such as glucagon and insulin. The polypeptide is Protease 3 (ptrA) (Salmonella typhimurium (strain LT2 / SGSC1412 / ATCC 700720)).